Here is a 401-residue protein sequence, read N- to C-terminus: 1-deoxy-D-xylulose 5-phosphate reductoisomerase (401 aa).

Residues Thr-11, Gly-12, Ser-13, Ile-14, Arg-38, Asn-39, and Asn-125 each coordinate NADPH. Position 126 (Lys-126) interacts with 1-deoxy-D-xylulose 5-phosphate. NADPH is bound at residue Glu-127. Mn(2+) is bound at residue Asp-151. Residues Ser-152, Glu-153, Ser-179, and His-202 each contribute to the 1-deoxy-D-xylulose 5-phosphate site. Glu-153 serves as a coordination point for Mn(2+). Residue Gly-208 coordinates NADPH. Residues Ser-215, Asn-220, Lys-221, and Glu-224 each contribute to the 1-deoxy-D-xylulose 5-phosphate site. Residue Glu-224 participates in Mn(2+) binding.

It belongs to the DXR family. Mg(2+) is required as a cofactor. The cofactor is Mn(2+).

The catalysed reaction is 2-C-methyl-D-erythritol 4-phosphate + NADP(+) = 1-deoxy-D-xylulose 5-phosphate + NADPH + H(+). Its pathway is isoprenoid biosynthesis; isopentenyl diphosphate biosynthesis via DXP pathway; isopentenyl diphosphate from 1-deoxy-D-xylulose 5-phosphate: step 1/6. Functionally, catalyzes the NADPH-dependent rearrangement and reduction of 1-deoxy-D-xylulose-5-phosphate (DXP) to 2-C-methyl-D-erythritol 4-phosphate (MEP). This is 1-deoxy-D-xylulose 5-phosphate reductoisomerase from Paraburkholderia xenovorans (strain LB400).